A 397-amino-acid polypeptide reads, in one-letter code: P-selectin glycoprotein ligand 1 (397 aa).

A signal peptide spans 1-17; that stretch reads MSPSFLVLLTILGPGNS. Residues 18–41 constitute a propeptide that is removed on maturation; sequence LQLQDPWGHETKEAPGPVHLRERR. The Extracellular segment spans residues 18 to 307; sequence LQLQDPWGHE…SSDLIPVKQC (290 aa). Tyrosine 54 bears the Sulfotyrosine mark. The O-linked (GalNAc...) threonine glycan is linked to threonine 58. A glycan (N-linked (GlcNAc...) asparagine) is linked at asparagine 66. The interval 89–261 is disordered; it reads TSAGTSERAT…TMETASTESN (173 aa). The segment covering 120-198 has biased composition (polar residues); that stretch reads STDSATQWSL…PMEAETSQPA (79 aa). 10 consecutive repeat copies span residues 126–135, 136–145, 146–155, 156–165, 166–175, 176–185, 186–195, 196–205, 206–215, and 216–225. The 10 X 10 AA tandem repeats stretch occupies residues 126–225; the sequence is QWSLTSVETV…KPAPTEAETT (100 aa). A compositionally biased stretch (polar residues) spans 236 to 261; the sequence is LFTTSAATEVPSTEPTTMETASTESN. An N-linked (GlcNAc...) asparagine glycan is attached at asparagine 261. Residues 308–328 form a helical membrane-spanning segment; it reads LLIILILASLATIFLVCTVVL. Residues 329–397 are Cytoplasmic-facing; the sequence is AVRLSRKTHM…DDLTLHSFLP (69 aa). The segment at 364 to 390 is disordered; sequence PVTANGGLPKVQDLKTEPSGDRDGDDL. A compositionally biased stretch (basic and acidic residues) spans 375 to 390; that stretch reads QDLKTEPSGDRDGDDL. Phosphothreonine is present on threonine 391. Serine 394 bears the Phosphoserine mark.

Homodimer; disulfide-linked. Interacts with P- and E-selectins, through their lectin/EGF domains. Interaction with P-selectin requires sialyl Lewis X glycan modification and tyrosine sulfation, probably on Tyr-54, for high affinity binding. Dimerization appears not to be required for P-selectin/SELP binding. Interacts with SNX20. Interacts with MSN and SYK; mediates SYK activation downstream of SELPLG. Interacts with HAVCR1. Displays complex, core-2, sialylated and fucosylated O-linked oligosaccharides, at least some of which appear to contain poly-N-acetyllactosamine with varying degrees of substitution. Mainly disialylated or neutral forms of the core-2 tetrasaccharide, Galbeta1--&gt;4GlcNAcbeta1--&gt;6(Galbeta1--&gt;3)GalNAcOH. The GlcN:GalN ratio is approximately 2:1 and the Man:Fuc ratio 3:5. Contains about 14% fucose with alpha-1,3 linkage present in two forms: One species is a disialylated, monofucosylated glycan, and the other, a monosialylated, trifucosylated glycan with a polylactosamine backbone. The fucosylated forms carry the Lewis antigen and are important for interaction with selectins and for functioning. No sulfated O-glycans. Some N-glycosylation. In terms of tissue distribution, highly expressed in blood, bone marrow, brain, adipose tissue, spleen, and thymus. Also expressed in heart, kidney, liver, muscle, ovary, and stomach.

The protein resides in the cell membrane. An SLe(x)-type proteoglycan, which through high affinity, calcium-dependent interactions with E- and P-selectins, mediates rapid rolling of leukocytes over vascular surfaces during the initial steps in inflammation. Critical for the initial leukocyte capture. The protein is P-selectin glycoprotein ligand 1 (Selplg) of Mus musculus (Mouse).